Reading from the N-terminus, the 615-residue chain is MSIDVPERADLEQVRGRWRNAVAGVLSKSNRTDSAQLGDHPERLLDTQTADGFAIRALYTAFDELPEPPLPGQWPFVRGGDPLRDVHSGWKVAEAFPANGATADTNAAVLAALGEGVSALLIRVGESGVAPDRLTALLSGVYLNLAPVILDAGADYRPACDVMLALVAQLDPGQRDTLSIDLGADPLTASLRDRPAPPIEEVVAVASRAAGERGLRAITVDGPAFHNLGATAATELAATVAAAVAYLRVLTESGLVVSDALRQISFRLAADDDQFMTLAKMRALRQLWARVAEVVGDPGGGAAVVHAETSLPMMTQRDPWVNMLRCTLAAFGAGVGGADTVLVHPFDVAIPGGFPGTAAGFARRIARNTQLLLLEESHVGRVLDPAGGSWFVEELTDRLARRAWQRFQAIEARGGFVEAHDFLAGQIAECAARRADDIAHRRLAITGVNEYPNLGEPALPPGDPTSPVRRYAAGFEALRDRSDHHLARTGARPRVLLLPLGPLAEHNIRTTFATNLLASGGIEAIDPGTVDAGTVGNAVADAGSPSVAVICGTDARYRDEVADIVQAARAAGVSRVYLAGPEKALGDAAHRPDEFLTAKINVVQALSNLLTRLGA.

It belongs to the methylmalonyl-CoA mutase family. As to quaternary structure, heterodimer of an alpha and a beta chain. It depends on adenosylcob(III)alamin as a cofactor.

It carries out the reaction (R)-methylmalonyl-CoA = succinyl-CoA. It participates in metabolic intermediate metabolism; propanoyl-CoA degradation; succinyl-CoA from propanoyl-CoA: step 3/3. Catalyzes the isomerization of succinyl-CoA to methylmalonyl-CoA during synthesis of propionate from tricarboxylic acid-cycle intermediates. The chain is Probable methylmalonyl-CoA mutase small subunit (mutA) from Mycobacterium bovis (strain ATCC BAA-935 / AF2122/97).